The sequence spans 370 residues: Small ribosomal subunit biogenesis GTPase RsgA (370 aa).

Residues 111–270 (RSEGQILAAN…LIDTPGLRGV (160 aa)) form the CP-type G domain. GTP contacts are provided by residues 158–161 (TKAD) and 212–220 (GQSGAGKST). 4 residues coordinate Zn(2+): C293, C298, H300, and C306.

Belongs to the TRAFAC class YlqF/YawG GTPase family. RsgA subfamily. In terms of assembly, monomer. Associates with 30S ribosomal subunit, binds 16S rRNA. Zn(2+) is required as a cofactor.

It localises to the cytoplasm. In terms of biological role, one of several proteins that assist in the late maturation steps of the functional core of the 30S ribosomal subunit. Helps release RbfA from mature subunits. May play a role in the assembly of ribosomal proteins into the subunit. Circularly permuted GTPase that catalyzes slow GTP hydrolysis, GTPase activity is stimulated by the 30S ribosomal subunit. This is Small ribosomal subunit biogenesis GTPase RsgA from Streptomyces avermitilis (strain ATCC 31267 / DSM 46492 / JCM 5070 / NBRC 14893 / NCIMB 12804 / NRRL 8165 / MA-4680).